Reading from the N-terminus, the 128-residue chain is Small ribosomal subunit protein bS6 (128 aa).

This sequence belongs to the bacterial ribosomal protein bS6 family.

Binds together with bS18 to 16S ribosomal RNA. This Leifsonia xyli subsp. xyli (strain CTCB07) protein is Small ribosomal subunit protein bS6.